The primary structure comprises 382 residues: uncharacterized protein (382 aa).

Transmembrane regions (helical) follow at residues 8–28 (VMLL…LNTL), 45–65 (MVSS…GYLI), 75–95 (YLAS…VGFW), 102–122 (FIAG…LMCS), 131–151 (LLAA…LLVS), 157–177 (LLHV…PLLF), 204–224 (LGVN…GLMP), 231–251 (GMAN…GILG), 270–290 (VQVF…AMAP), 291–311 (ALFI…AWAC), 325–345 (ALLL…AMLM), and 349–369 (SDNL…LMLL).

The protein belongs to the major facilitator superfamily. YcaD (TC 2.A.1.26) family.

It is found in the cell inner membrane. This is an uncharacterized protein from Salmonella agona (strain SL483).